The following is a 388-amino-acid chain: Probable tRNA sulfurtransferase (388 aa).

Residues 55–162 (VTLDDKLKKI…PEGVLIFTDR (108 aa)) enclose the THUMP domain. ATP is bound by residues 180-181 (LL), 205-206 (TF), Arg-264, Gly-286, and Gln-295.

It belongs to the ThiI family.

The protein resides in the cytoplasm. It carries out the reaction [ThiI sulfur-carrier protein]-S-sulfanyl-L-cysteine + a uridine in tRNA + 2 reduced [2Fe-2S]-[ferredoxin] + ATP + H(+) = [ThiI sulfur-carrier protein]-L-cysteine + a 4-thiouridine in tRNA + 2 oxidized [2Fe-2S]-[ferredoxin] + AMP + diphosphate. The enzyme catalyses [ThiS sulfur-carrier protein]-C-terminal Gly-Gly-AMP + S-sulfanyl-L-cysteinyl-[cysteine desulfurase] + AH2 = [ThiS sulfur-carrier protein]-C-terminal-Gly-aminoethanethioate + L-cysteinyl-[cysteine desulfurase] + A + AMP + 2 H(+). The protein operates within cofactor biosynthesis; thiamine diphosphate biosynthesis. Functionally, catalyzes the ATP-dependent transfer of a sulfur to tRNA to produce 4-thiouridine in position 8 of tRNAs, which functions as a near-UV photosensor. Also catalyzes the transfer of sulfur to the sulfur carrier protein ThiS, forming ThiS-thiocarboxylate. This is a step in the synthesis of thiazole, in the thiamine biosynthesis pathway. The sulfur is donated as persulfide by IscS. The protein is Probable tRNA sulfurtransferase of Thermotoga maritima (strain ATCC 43589 / DSM 3109 / JCM 10099 / NBRC 100826 / MSB8).